The following is a 174-amino-acid chain: Ribosome maturation factor RimM (174 aa).

In terms of domain architecture, PRC barrel spans 101-174 (AGEFYLADLC…IELLQRWILE (74 aa)).

Belongs to the RimM family. Binds ribosomal protein uS19.

The protein localises to the cytoplasm. Its function is as follows. An accessory protein needed during the final step in the assembly of 30S ribosomal subunit, possibly for assembly of the head region. Essential for efficient processing of 16S rRNA. May be needed both before and after RbfA during the maturation of 16S rRNA. It has affinity for free ribosomal 30S subunits but not for 70S ribosomes. This chain is Ribosome maturation factor RimM, found in Treponema pallidum (strain Nichols).